The sequence spans 244 residues: Phosphonates import ATP-binding protein PhnC (244 aa).

An ABC transporter domain is found at 6–244 (IECHNLETAY…LQAQFVVNSQ (239 aa)). 41–48 (GLNGAGKS) is an ATP binding site.

It belongs to the ABC transporter superfamily. Phosphonates importer (TC 3.A.1.9.1) family. As to quaternary structure, the complex is composed of two ATP-binding proteins (PhnC), two transmembrane proteins (PhnE) and a solute-binding protein (PhnD).

It is found in the cell inner membrane. The enzyme catalyses phosphonate(out) + ATP + H2O = phosphonate(in) + ADP + phosphate + H(+). Part of the ABC transporter complex PhnCDE involved in phosphonates import. Responsible for energy coupling to the transport system. This chain is Phosphonates import ATP-binding protein PhnC, found in Trichormus variabilis (strain ATCC 29413 / PCC 7937) (Anabaena variabilis).